Consider the following 221-residue polypeptide: MDEEWTPRTELGRLVANGEIKTISEALHSKLPLKEYQIVDYLIPDLKDEVINIERAQRMTDSGRRMNYSITAVVGNGNGYVGVGRGKAKEAAPAIKKAIDNAKLNIIEIKRGCGSWECGCGKPHTLPFLVNGKSGSVSVTLKPAPQGVGLAVGDVVKVILRMAGIDDAWGFAAGHTKTTVNYALATFDALKKTVSIKINPKINLSTPIYVGGIGNAGSNKD.

The 64-residue stretch at 46–109 folds into the S5 DRBM domain; the sequence is LKDEVINIER…DNAKLNIIEI (64 aa).

Belongs to the universal ribosomal protein uS5 family. As to quaternary structure, part of the 30S ribosomal subunit. Contacts protein S4.

In terms of biological role, with S4 and S12 plays an important role in translational accuracy. The polypeptide is Small ribosomal subunit protein uS5 (Picrophilus torridus (strain ATCC 700027 / DSM 9790 / JCM 10055 / NBRC 100828 / KAW 2/3)).